Reading from the N-terminus, the 246-residue chain is uncharacterized protein (246 aa).

This is an uncharacterized protein from Thermotoga maritima (strain ATCC 43589 / DSM 3109 / JCM 10099 / NBRC 100826 / MSB8).